Consider the following 108-residue polypeptide: UPF0166 protein MJ1524 (108 aa).

The protein belongs to the UPF0166 family.

The chain is UPF0166 protein MJ1524 from Methanocaldococcus jannaschii (strain ATCC 43067 / DSM 2661 / JAL-1 / JCM 10045 / NBRC 100440) (Methanococcus jannaschii).